The chain runs to 236 residues: MARFKRILLKLSGESLMGEKQYGIDEKRLGEYAQQIKEIHDLGVQIGIVIGGGNIFRGLSGASKGFDRVKGDQMGMLATVINSLGLSSALGAAGVKARVLTAIRMEPIGEFYNKWKAIEAMENGEVVIMSAGTGNPFFTTDTGSSLRGIEIEADVMLKGTRVDGIYTADPEKDPTATKFDDITYDEVLKRGLKVMDLTATCMCKENNLPIIVFDMDTVGNLKKVMTGENIGTLVHN.

An ATP-binding site is contributed by 10 to 13 (KLSG). UMP is bound at residue G52. Residues G53 and R57 each coordinate ATP. UMP contacts are provided by residues D72 and 133-140 (TGNPFFTT). 3 residues coordinate ATP: T160, Y166, and D169.

It belongs to the UMP kinase family. Homohexamer.

The protein localises to the cytoplasm. It carries out the reaction UMP + ATP = UDP + ADP. Its pathway is pyrimidine metabolism; CTP biosynthesis via de novo pathway; UDP from UMP (UMPK route): step 1/1. Inhibited by UTP. In terms of biological role, catalyzes the reversible phosphorylation of UMP to UDP. The chain is Uridylate kinase from Phocaeicola vulgatus (strain ATCC 8482 / DSM 1447 / JCM 5826 / CCUG 4940 / NBRC 14291 / NCTC 11154) (Bacteroides vulgatus).